A 197-amino-acid chain; its full sequence is Beta-crystallin A2 (197 aa).

The interval 1 to 11 (MSSAPAQGPAP) is N-terminal arm. Beta/gamma crystallin 'Greek key' domains lie at 12 to 52 (ASLT…KVEN) and 53 to 99 (GAWV…RPVL). The segment at 100–105 (CANHSD) is connecting peptide. Beta/gamma crystallin 'Greek key' domains lie at 106–147 (SRVT…KVSS) and 148–196 (GAWV…RRVQ).

The protein belongs to the beta/gamma-crystallin family. As to quaternary structure, homo/heterodimer, or complexes of higher-order. The structure of beta-crystallin oligomers seems to be stabilized through interactions between the N-terminal arms.

Functionally, crystallins are the dominant structural components of the vertebrate eye lens. The chain is Beta-crystallin A2 (CRYBA2) from Bos taurus (Bovine).